Here is a 74-residue protein sequence, read N- to C-terminus: DNA-directed RNA polymerase subunit omega (74 aa).

Belongs to the RNA polymerase subunit omega family. As to quaternary structure, the RNAP catalytic core consists of 2 alpha, 1 beta, 1 beta' and 1 omega subunit. When a sigma factor is associated with the core the holoenzyme is formed, which can initiate transcription.

It catalyses the reaction RNA(n) + a ribonucleoside 5'-triphosphate = RNA(n+1) + diphosphate. In terms of biological role, promotes RNA polymerase assembly. Latches the N- and C-terminal regions of the beta' subunit thereby facilitating its interaction with the beta and alpha subunits. In Helicobacter acinonychis (strain Sheeba), this protein is DNA-directed RNA polymerase subunit omega.